We begin with the raw amino-acid sequence, 164 residues long: uncharacterized protein (164 aa).

This is an uncharacterized protein from Mycobacterium tuberculosis (strain CDC 1551 / Oshkosh).